Reading from the N-terminus, the 188-residue chain is U1 small nuclear ribonucleoprotein C-2 (188 aa).

The Matrin-type zinc finger occupies 4-36 (YYCDYCDVFLVSESPSVRKAHNSGRNHLTNVRD). The disordered stretch occupies residues 57 to 188 (FETGGGNSTS…MNPDRARQLG (132 aa)). Positions 72–82 (GNPPGSQPGPP) are enriched in pro residues. The span at 109 to 124 (AMLALMNGQNGMSSPG) shows a compositional bias: low complexity. Positions 125-141 (SGPPPMRFAGPPIPNNM) are enriched in pro residues.

Belongs to the U1 small nuclear ribonucleoprotein C family. In terms of assembly, U1 snRNP is composed of the 7 core Sm proteins B/B', D1, D2, D3, E, F and G that assemble in a heptameric protein ring on the Sm site of the small nuclear RNA to form the core snRNP, and at least 3 U1 snRNP-specific proteins U1-70K, U1-A and U1-C. U1-C interacts with U1 snRNA and the 5' splice-site region of the pre-mRNA.

The protein localises to the nucleus. Component of the spliceosomal U1 snRNP, which is essential for recognition of the pre-mRNA 5' splice-site and the subsequent assembly of the spliceosome. U1-C is directly involved in initial 5' splice-site recognition for both constitutive and regulated alternative splicing. The interaction with the 5' splice-site seems to precede base-pairing between the pre-mRNA and the U1 snRNA. Stimulates commitment or early (E) complex formation by stabilizing the base pairing of the 5' end of the U1 snRNA and the 5' splice-site region. The polypeptide is U1 small nuclear ribonucleoprotein C-2 (Puccinia graminis f. sp. tritici (strain CRL 75-36-700-3 / race SCCL) (Black stem rust fungus)).